A 320-amino-acid chain; its full sequence is MKSIIFMGTPEFSAPILQSLIDEPNYDVIGVVTQPDRKVGRKHVLTPSPVKKVAVKNDIKVYQPEKLSGSAELTELIALNADLIVTAAFGQFLPMSLINSVKIGAVNVHASLLPKYRGGAPVHYAIMNGDKETGVTIIYMVKKMDAGEMLATAKIPITDQDDVGTMFEKLSLLGRDLLLDTLPQLIEGNVQPVKQDEEQVSFSPNISPEEEEIDINLPARLVDAKVRGLRPFPVAYFMMEGKRTKIWKTKVIDQTTDLKPGQVVSKTKHELLVATGEHGVISIEELQPAGKQKMTITDYLNGVGENLHPGKQIIDNDKSK.

111 to 114 (SLLP) contributes to the (6S)-5,6,7,8-tetrahydrofolate binding site.

Belongs to the Fmt family.

The enzyme catalyses L-methionyl-tRNA(fMet) + (6R)-10-formyltetrahydrofolate = N-formyl-L-methionyl-tRNA(fMet) + (6S)-5,6,7,8-tetrahydrofolate + H(+). Its function is as follows. Attaches a formyl group to the free amino group of methionyl-tRNA(fMet). The formyl group appears to play a dual role in the initiator identity of N-formylmethionyl-tRNA by promoting its recognition by IF2 and preventing the misappropriation of this tRNA by the elongation apparatus. This chain is Methionyl-tRNA formyltransferase, found in Pediococcus pentosaceus (strain ATCC 25745 / CCUG 21536 / LMG 10740 / 183-1w).